The chain runs to 346 residues: KH domain-containing, RNA-binding, signal transduction-associated protein 3 (346 aa).

The segment at 1–160 (MEEKYLPELM…IKKFLIPDYN (160 aa)) is involved in homodimerization. K4 is covalently cross-linked (Glycyl lysine isopeptide (Lys-Gly) (interchain with G-Cter in SUMO2)). One can recognise a KH domain in the interval 61 to 127 (LIPVKQFPKF…AKYFHLNDDL (67 aa)). The interval 212–251 (RPVGVVVPRGTPTPRGVLSTRGPVSRGRGLLTPRARGVPP) is interaction with SIAH1. A compositionally biased stretch (low complexity) spans 213 to 228 (PVGVVVPRGTPTPRGV). 2 disordered regions span residues 213 to 267 (PVGV…ETYG) and 318 to 346 (QEEW…YGRY). Pro residues predominate over residues 253-262 (GYRPPPPPPT).

Belongs to the KHDRBS family. Self-associates to form homooligomers; dimerization increases RNA affinity. Interacts with KHDRBS2/SLM-1. Interacts with KHDRBS1/SAM68; heterooligomer formation of KHDRBS family proteins may modulate RNA substrate specificity. Interacts with the splicing regulatory proteins SFRS9, SAFB and YTHDC1. Interacts with HNRPL. Interacts with RBMX, RBMY1A1, p85 subunit of PI3-kinase, SERPINB5. Interacts with SIAH1 which promotes targeting for degradation. Phosphorylated on tyrosine residues. Isoform 1 C-terminal region is tyrosine-rich, but isoform 2 lacking this C-terminal region is also tyrosine-phosphorylated. Ubiquitous with higher expression in testis, skeletal muscle and brain. Expressed in the kidney only in podocytes, the glomerular epithelial cells of the kidney. Strongly expressed after meiosis.

Its subcellular location is the nucleus. Functionally, RNA-binding protein that plays a role in the regulation of alternative splicing and influences mRNA splice site selection and exon inclusion. Binds preferentially to the 5'-[AU]UAAA-3' motif in vitro. Binds optimally to RNA containing 5'-[AU]UAA-3' as a bipartite motif spaced by more than 15 nucleotides. Binds poly(A). RNA-binding abilities are down-regulated by tyrosine kinase PTK6. Involved in splice site selection of vascular endothelial growth factor. In vitro regulates CD44 alternative splicing by direct binding to purine-rich exonic enhancer. Can regulate alternative splicing of neurexins NRXN1-3 in the laminin G-like domain 6 containing the evolutionary conserved neurexin alternative spliced segment 4 (AS4) involved in neurexin selective targeting to postsynaptic partners such as neuroligins and LRRTM family members. Targeted, cell-type specific splicing regulation of NRXN1 at AS4 is involved in neuronal glutamatergic synapse function and plasticity. May regulate expression of KHDRBS2/SLIM-1 in defined brain neuron populations by modifying its alternative splicing. Can bind FABP9 mRNA. May play a role as a negative regulator of cell growth. Inhibits cell proliferation. In terms of biological role, (Microbial infection) Involved in post-transcriptional regulation of HIV-1 gene expression. The sequence is that of KH domain-containing, RNA-binding, signal transduction-associated protein 3 (KHDRBS3) from Homo sapiens (Human).